Reading from the N-terminus, the 156-residue chain is uncharacterized protein (156 aa).

The signal sequence occupies residues 1 to 22 (MFGKVSSLLVFASFLIIQGAFA). The GPI-anchor amidated serine moiety is linked to residue Ser129. Positions 130–156 (GSPVRFSKSSLLIVSLLSIAAFAALVL) are cleaved as a propeptide — removed in mature form.

It is found in the cell membrane. This is an uncharacterized protein from Schizosaccharomyces pombe (strain 972 / ATCC 24843) (Fission yeast).